The sequence spans 473 residues: Photosystem II CP43 reaction center protein (473 aa).

Residues 1 to 14 (MKILYSQRRFYHVE) constitute a propeptide that is removed on maturation. The next 5 helical transmembrane spans lie at 69-93 (LFEV…PHLA), 134-155 (LIGP…RDKN), 178-200 (KAMF…RYIN), 255-275 (KPFG…LSYS), and 291-312 (WYNN…ASQA). E367 lines the [CaMn4O5] cluster pocket. The chain crosses the membrane as a helical span at residues 447 to 471 (RARAAAAGFEKGINRENEPVLSMKL).

This sequence belongs to the PsbB/PsbC family. PsbC subfamily. PSII is composed of 1 copy each of membrane proteins PsbA, PsbB, PsbC, PsbD, PsbE, PsbF, PsbH, PsbI, PsbJ, PsbK, PsbL, PsbM, PsbT, PsbY, PsbZ, Psb30/Ycf12, at least 3 peripheral proteins of the oxygen-evolving complex and a large number of cofactors. It forms dimeric complexes. It depends on Binds multiple chlorophylls and provides some of the ligands for the Ca-4Mn-5O cluster of the oxygen-evolving complex. It may also provide a ligand for a Cl- that is required for oxygen evolution. PSII binds additional chlorophylls, carotenoids and specific lipids. as a cofactor.

The protein resides in the plastid. The protein localises to the chloroplast thylakoid membrane. Functionally, one of the components of the core complex of photosystem II (PSII). It binds chlorophyll and helps catalyze the primary light-induced photochemical processes of PSII. PSII is a light-driven water:plastoquinone oxidoreductase, using light energy to abstract electrons from H(2)O, generating O(2) and a proton gradient subsequently used for ATP formation. The polypeptide is Photosystem II CP43 reaction center protein (Galdieria sulphuraria (Red alga)).